The chain runs to 606 residues: Sulfite reductase [NADPH] flavoprotein alpha-component (606 aa).

The Flavodoxin-like domain maps to 68-206 (ITILSASQTG…AAEAWRKEVT (139 aa)). FMN-binding positions include 74 to 79 (SQTGNA), 121 to 124 (STQG), and 157 to 166 (LGDITYEHFA). The region spanning 240 to 454 (ESPLTATLSV…VEHNDNFRLP (215 aa)) is the FAD-binding FR-type domain. Residues Thr-328, Gln-362, 392-395 (RLYS), 410-412 (TVG), Tyr-416, and 425-428 (GGAS) each bind FAD. Residues 525–526 (SR), 531–535 (KVYVQ), and Asp-568 each bind NADP(+). Tyr-606 is a binding site for FAD.

The protein belongs to the NADPH-dependent sulphite reductase flavoprotein subunit CysJ family. It in the N-terminal section; belongs to the flavodoxin family. In the C-terminal section; belongs to the flavoprotein pyridine nucleotide cytochrome reductase family. Alpha(8)-beta(8). The alpha component is a flavoprotein, the beta component is a hemoprotein. FAD serves as cofactor. Requires FMN as cofactor.

The catalysed reaction is hydrogen sulfide + 3 NADP(+) + 3 H2O = sulfite + 3 NADPH + 4 H(+). It participates in sulfur metabolism; hydrogen sulfide biosynthesis; hydrogen sulfide from sulfite (NADPH route): step 1/1. Its function is as follows. Component of the sulfite reductase complex that catalyzes the 6-electron reduction of sulfite to sulfide. This is one of several activities required for the biosynthesis of L-cysteine from sulfate. The flavoprotein component catalyzes the electron flow from NADPH -&gt; FAD -&gt; FMN to the hemoprotein component. This chain is Sulfite reductase [NADPH] flavoprotein alpha-component, found in Zymomonas mobilis subsp. mobilis (strain ATCC 31821 / ZM4 / CP4).